The chain runs to 73 residues: Putative antimicrobial peptide clone 4 (73 aa).

The first 22 residues, 1 to 22 (MQMKYLIPIFFLVLIVADHCHA), serve as a signal peptide directing secretion. The propeptide occupies 45 to 73 (DITSQIEQYRNLQKREAELEDILANLPVY).

This sequence belongs to the non-disulfide-bridged peptide (NDBP) superfamily. Short antimicrobial peptide (group 4) family. In terms of tissue distribution, expressed by the venom gland.

It is found in the secreted. Its function is as follows. Antimicrobial peptide. Has a high antibacterial activity against the Gram-positive bacterium S.aureus (MIC=5-17.30 uM), the methicillin-resistant S.aureus (MRSA) (MIC=17.30 uM), and E.faecalis (MIC=69.23 uM). Has antifungal activity against Candida spp. and one Cryptococcus neoformans strains with MICs values ranging from 6.25 to 100 uM. Also shows an inhibitory activity on C.albicans biofilms at high concentrations. Has a moderate hemolytic potency (18% at 20 uM). Also inhibits the growth of the five cancer cell lines tested. In the model of polymicrobial sepsis, it exhibits an antibiotic effect, reducing the levels of microorganisms in the infectious focus and the inflammatory responses in the lung and cecum of septic animals. The sequence is that of Putative antimicrobial peptide clone 4 from Tityus costatus (Brazilian scorpion).